The primary structure comprises 879 residues: Metabotropic glutamate receptor 3 (879 aa).

The signal sequence occupies residues 1-24 (MKMLTRLQVLTLALFSKGFLLSLG). The Extracellular segment spans residues 25-577 (DHNFLRREIK…DYIRWEDAWA (553 aa)). The cysteines at positions 57 and 99 are disulfide-linked. L-glutamate is bound by residues S151 and 172–174 (AST). N-linked (GlcNAc...) asparagine glycosylation occurs at N209. L-glutamate is bound at residue Y222. Intrachain disulfides connect C240/C527, C361/C373, C412/C419, C509/C528, C513/C531, C534/C546, and C549/C562. N-linked (GlcNAc...) asparagine glycosylation occurs at N292. Position 301 (D301) interacts with L-glutamate. L-glutamate is bound at residue K389. 2 N-linked (GlcNAc...) asparagine glycosylation sites follow: N414 and N439. The chain crosses the membrane as a helical span at residues 578 to 598 (IGPVTIACLGFMCTCMVITVF). Topologically, residues 599–613 (IKHNNTPLVKASGRE) are cytoplasmic. A helical membrane pass occupies residues 614–634 (LCYILLFGVGLSYCMTFFFIA). The Extracellular segment spans residues 635-688 (KPSPVICALRRLGLGSSFAICYSALLTKTNCIARIFDGVKNGAQRPKFISPSSQ). Residues 689 to 709 (VFICLGLILVQIVMVSVWLIL) traverse the membrane as a helical segment. The Cytoplasmic segment spans residues 710–735 (EAPGTRRYTLAEKRETVILKCNVKDS). The chain crosses the membrane as a helical span at residues 736–756 (SMLISLTYDVILVILCTVYAF). The Extracellular segment spans residues 757–769 (KTRKCPENFNEAK). A helical membrane pass occupies residues 770–790 (FIGFTMYTTCIIWLAFLPIFY). Over 791–807 (VTSSDYRVQTTTMCISV) the chain is Cytoplasmic. A helical membrane pass occupies residues 808–828 (SLSGFVVLGCLFAPKVHIILF). The Extracellular portion of the chain corresponds to 829 to 879 (QPQKNVVTHRLHLNRFSVSGTGTTYSQSSASMYVPTVCNGREVLDSTTSSL).

Belongs to the G-protein coupled receptor 3 family. Interacts with TAMALIN.

The protein resides in the cell membrane. Functionally, G-protein coupled receptor for glutamate. Ligand binding causes a conformation change that triggers signaling via guanine nucleotide-binding proteins (G proteins) and modulates the activity of down-stream effectors. Signaling inhibits adenylate cyclase activity. The polypeptide is Metabotropic glutamate receptor 3 (GRM3) (Macaca fascicularis (Crab-eating macaque)).